The sequence spans 269 residues: 4-hydroxy-tetrahydrodipicolinate reductase (269 aa).

Residues Gly8–Met13 and Glu34 contribute to the NAD(+) site. Arg35 lines the NADP(+) pocket. Residues Gly98 to Thr100 and Ala122 to Tyr125 each bind NAD(+). Catalysis depends on His155, which acts as the Proton donor/acceptor. His156 contacts (S)-2,3,4,5-tetrahydrodipicolinate. Residue Lys159 is the Proton donor of the active site. Position 165–166 (Gly165–Thr166) interacts with (S)-2,3,4,5-tetrahydrodipicolinate.

Belongs to the DapB family.

It localises to the cytoplasm. The catalysed reaction is (S)-2,3,4,5-tetrahydrodipicolinate + NAD(+) + H2O = (2S,4S)-4-hydroxy-2,3,4,5-tetrahydrodipicolinate + NADH + H(+). It catalyses the reaction (S)-2,3,4,5-tetrahydrodipicolinate + NADP(+) + H2O = (2S,4S)-4-hydroxy-2,3,4,5-tetrahydrodipicolinate + NADPH + H(+). It functions in the pathway amino-acid biosynthesis; L-lysine biosynthesis via DAP pathway; (S)-tetrahydrodipicolinate from L-aspartate: step 4/4. Its function is as follows. Catalyzes the conversion of 4-hydroxy-tetrahydrodipicolinate (HTPA) to tetrahydrodipicolinate. The protein is 4-hydroxy-tetrahydrodipicolinate reductase of Vibrio vulnificus (strain YJ016).